We begin with the raw amino-acid sequence, 284 residues long: 2-dehydro-3-deoxyphosphooctonate aldolase (284 aa).

It belongs to the KdsA family.

It localises to the cytoplasm. The catalysed reaction is D-arabinose 5-phosphate + phosphoenolpyruvate + H2O = 3-deoxy-alpha-D-manno-2-octulosonate-8-phosphate + phosphate. It functions in the pathway carbohydrate biosynthesis; 3-deoxy-D-manno-octulosonate biosynthesis; 3-deoxy-D-manno-octulosonate from D-ribulose 5-phosphate: step 2/3. It participates in bacterial outer membrane biogenesis; lipopolysaccharide biosynthesis. This Aliivibrio fischeri (strain ATCC 700601 / ES114) (Vibrio fischeri) protein is 2-dehydro-3-deoxyphosphooctonate aldolase.